The primary structure comprises 145 residues: Large ribosomal subunit protein uL13 (145 aa).

The protein belongs to the universal ribosomal protein uL13 family. Part of the 50S ribosomal subunit.

This protein is one of the early assembly proteins of the 50S ribosomal subunit, although it is not seen to bind rRNA by itself. It is important during the early stages of 50S assembly. In Geobacillus thermodenitrificans (strain NG80-2), this protein is Large ribosomal subunit protein uL13.